Reading from the N-terminus, the 599-residue chain is Elongation factor 4 (599 aa).

One can recognise a tr-type G domain in the interval 2–184 (KNIRNFSIIA…RLVRDIPPPQ (183 aa)). Residues 14-19 (DHGKST) and 131-134 (NKID) each bind GTP.

This sequence belongs to the TRAFAC class translation factor GTPase superfamily. Classic translation factor GTPase family. LepA subfamily.

Its subcellular location is the cell inner membrane. The catalysed reaction is GTP + H2O = GDP + phosphate + H(+). Its function is as follows. Required for accurate and efficient protein synthesis under certain stress conditions. May act as a fidelity factor of the translation reaction, by catalyzing a one-codon backward translocation of tRNAs on improperly translocated ribosomes. Back-translocation proceeds from a post-translocation (POST) complex to a pre-translocation (PRE) complex, thus giving elongation factor G a second chance to translocate the tRNAs correctly. Binds to ribosomes in a GTP-dependent manner. This is Elongation factor 4 from Salmonella arizonae (strain ATCC BAA-731 / CDC346-86 / RSK2980).